A 161-amino-acid polypeptide reads, in one-letter code: MSQLTHINAAGEAHMVDVSAKAETVREARAEAFVTMRSETLAMIVDGKHHKGDVFATARIAGIQAAKRTWELIPLCHPLLLSKVEIQLQAEPEHNRVRIESLCRLTGKTGVEMEALTAASVAALTIYDMCKAVQKDIVIGPVRLLAKSGGKSGDFKVDAHD.

Substrate is bound by residues 75–77 (LCH) and 113–114 (ME). Asp128 is an active-site residue.

It belongs to the MoaC family. In terms of assembly, homohexamer; trimer of dimers.

The catalysed reaction is (8S)-3',8-cyclo-7,8-dihydroguanosine 5'-triphosphate = cyclic pyranopterin phosphate + diphosphate. It functions in the pathway cofactor biosynthesis; molybdopterin biosynthesis. In terms of biological role, catalyzes the conversion of (8S)-3',8-cyclo-7,8-dihydroguanosine 5'-triphosphate to cyclic pyranopterin monophosphate (cPMP). In Salmonella typhi, this protein is Cyclic pyranopterin monophosphate synthase.